The sequence spans 144 residues: UPF0547 protein C16orf87 homolog (144 aa).

Residues 33–112 (HAKQSQRLPP…EEKEKQEKEV (80 aa)) are disordered. The span at 35–45 (KQSQRLPPTSE) shows a compositional bias: polar residues. Residues 50–62 (PKRRRTERIKRER) are compositionally biased toward basic residues. Composition is skewed to basic and acidic residues over residues 63 to 74 (IHTAVNRDLENR) and 99 to 112 (KKHE…EKEV). Residues 94–122 (KTATTKKHEEEKEKQEKEVDMYANLSDEK) adopt a coiled-coil conformation.

This sequence belongs to the UPF0547 family.

The sequence is that of UPF0547 protein C16orf87 homolog from Xenopus laevis (African clawed frog).